We begin with the raw amino-acid sequence, 367 residues long: Probable butyrate kinase (367 aa).

Belongs to the acetokinase family.

Its subcellular location is the cytoplasm. It carries out the reaction butanoate + ATP = butanoyl phosphate + ADP. This Bacillus cereus (strain ZK / E33L) protein is Probable butyrate kinase.